Here is a 407-residue protein sequence, read N- to C-terminus: Tyrosine--tRNA ligase (407 aa).

Tyr36 provides a ligand contact to L-tyrosine. The short motif at 41–50 (PTADSLHIGH) is the 'HIGH' region element. The L-tyrosine site is built by Tyr169 and Gln173. Residues 229 to 233 (KMGKT) carry the 'KMSKS' region motif. Lys232 serves as a coordination point for ATP. Residues 341–407 (KGILDILVET…KKSYNRIVIE (67 aa)) form the S4 RNA-binding domain.

It belongs to the class-I aminoacyl-tRNA synthetase family. TyrS type 1 subfamily. As to quaternary structure, homodimer.

Its subcellular location is the cytoplasm. The catalysed reaction is tRNA(Tyr) + L-tyrosine + ATP = L-tyrosyl-tRNA(Tyr) + AMP + diphosphate + H(+). Its function is as follows. Catalyzes the attachment of tyrosine to tRNA(Tyr) in a two-step reaction: tyrosine is first activated by ATP to form Tyr-AMP and then transferred to the acceptor end of tRNA(Tyr). This chain is Tyrosine--tRNA ligase, found in Clostridium tetani (strain Massachusetts / E88).